Consider the following 547-residue polypeptide: Sodium/hydrogen exchanger 9B2 (547 aa).

The interval 1-68 (MEDEDKTAEC…PQDSPTEPNG (68 aa)) is disordered. Topologically, residues 1–86 (MEDEDKTAEC…ACPPRGCLAR (86 aa)) are cytoplasmic. Residues 23 to 45 (APPHHELQEERVMSLRGTDRSEP) are compositionally biased toward basic and acidic residues. Residue Ser49 is modified to Phosphoserine. Residues 87–104 (VITNGTMVVLLWAMVWSV) traverse the membrane as a helical segment. Residues 105–113 (TGPECLPGG) are Extracellular-facing. A helical membrane pass occupies residues 114-133 (NLFGIIILFYCSITGGKLFG). The Cytoplasmic segment spans residues 134–144 (LIKFPTLPPLP). The chain crosses the membrane as a helical span at residues 145–161 (PLLGMLLAGFLLRNIPV). At 162–171 (INDSVRIQHK) the chain is on the extracellular side. The chain crosses the membrane as a helical span at residues 172–189 (WSSSLRSIALSVILVRAG). The Cytoplasmic portion of the chain corresponds to 190-200 (LGLDSKALRKL). The chain crosses the membrane as a helical span at residues 201–227 (KGVCVRLAMGPCIVEACASAILSHFLM). Residues 228–233 (GLPWQW) lie on the Extracellular side of the membrane. Residues 234 to 242 (GFILGFVVG) traverse the membrane as a helical segment. The Cytoplasmic portion of the chain corresponds to 243-270 (AVSPAVVVPSMLLLQEGGYGVGKGIPTL). Val244, Gly275, Asp278, and Asp279 together coordinate Na(+). The chain crosses the membrane as a helical span at residues 271–290 (LMAAGSFDDILAITGFNTCL). Over 291-300 (GVAFSTGSTV) the chain is Extracellular. A helical membrane pass occupies residues 301–324 (FNIFRGILEVVIGVAAGSFLGFFI). The Cytoplasmic segment spans residues 325–339 (QYFPSRDQDNLVWKR). A helical transmembrane segment spans residues 340–357 (AFLVLGFAVLAVFSSVYF). The Extracellular portion of the chain corresponds to 358–361 (SFPG). The chain crosses the membrane as a helical span at residues 362–373 (SGGLCTLVMAFL). Residues 374–390 (AGMRWTDKKSEVEKVIA) are Cytoplasmic-facing. A helical membrane pass occupies residues 391-411 (VTWDVFQPLLFGLIGAEVSIV). Residues 412–417 (SLRAET) are Extracellular-facing. A helical transmembrane segment spans residues 418 to 440 (VGLCVATLSIAVLIRILTTFLMV). Topologically, residues 441–461 (CFAGFNIKEKIFISFAWLPKA) are cytoplasmic. Residues 462–473 (TVQAAIGSVALD) form a helical membrane-spanning segment. Over 474–486 (TARSHGEKQLEDY) the chain is Extracellular. A helical transmembrane segment spans residues 487 to 509 (GMDVLTVAFLAILITAPIGSLLI). Topologically, residues 510–547 (GLLGPRVLQKSEHRTEEEVQGETSAHIQRKPEDSITEA) are cytoplasmic. A disordered region spans residues 522–547 (HRTEEEVQGETSAHIQRKPEDSITEA). Over residues 538–547 (RKPEDSITEA) the composition is skewed to basic and acidic residues.

Belongs to the monovalent cation:proton antiporter 1 (CPA1) transporter (TC 2.A.36) family. In terms of assembly, homodimer; dimerization is essential for SLC9B2 activity. Lipids seem to play a role in the stabilization of the dimerization subdomain. As to expression, widely expressed. However expression seems to be restricted to specific cell types within individual organs, e.g. osteoclasts in the bone, distal tubules of the kidney or beta-cells of Langerhans islets. In sperm specifically present in the principal piece of sperm tail (at protein level).

The protein resides in the cell membrane. It localises to the mitochondrion membrane. Its subcellular location is the endosome membrane. The protein localises to the lysosome membrane. It is found in the recycling endosome membrane. The protein resides in the cytoplasmic vesicle. It localises to the secretory vesicle. Its subcellular location is the synaptic vesicle membrane. The protein localises to the cell projection. It is found in the cilium. The protein resides in the flagellum membrane. It localises to the basolateral cell membrane. Its subcellular location is the apical cell membrane. The enzyme catalyses Na(+)(in) + H(+)(out) = Na(+)(out) + H(+)(in). It carries out the reaction Li(+)(out) + H(+)(in) = Li(+)(in) + H(+)(out). The catalysed reaction is Li(+)(in) + Na(+)(out) = Li(+)(out) + Na(+)(in). Its activity is regulated as follows. Allosterically inhibited by the N-terminal domain. Inhibited by phloretin. Electroneutral Na(+) Li(+)/H(+) antiporter that extrudes Na(+) or Li(+) in exchange for external protons across the membrane. Uses the proton gradient/membrane potential to extrude sodium. Contributes to the regulation of intracellular pH and sodium homeostasis. Also able to mediate Na(+)/Li(+) antiporter activity in kidney. May play a physiological role in renal tubular function and blood pressure homeostasis. Plays an important role for insulin secretion and clathrin-mediated endocytosis in beta-cells. Involved in sperm motility and fertility. It is controversial whether SLC9B2 plays a role in osteoclast differentiation or not. The polypeptide is Sodium/hydrogen exchanger 9B2 (Mus musculus (Mouse)).